An 81-amino-acid polypeptide reads, in one-letter code: 2,3-bisphosphoglycerate-independent phosphoglycerate mutase (81 aa).

Ser14 functions as the Phosphoserine intermediate in the catalytic mechanism. Ser14 serves as a coordination point for Mn(2+). His75 is a substrate binding site.

Belongs to the BPG-independent phosphoglycerate mutase family. Monomer. Mn(2+) serves as cofactor.

It catalyses the reaction (2R)-2-phosphoglycerate = (2R)-3-phosphoglycerate. It participates in carbohydrate degradation; glycolysis; pyruvate from D-glyceraldehyde 3-phosphate: step 3/5. Its function is as follows. Catalyzes the interconversion of 2-phosphoglycerate and 3-phosphoglycerate. This Tomato big bud phytoplasma protein is 2,3-bisphosphoglycerate-independent phosphoglycerate mutase (gpmI).